Reading from the N-terminus, the 287-residue chain is Damage-control phosphatase PH1575 (287 aa).

The Subfamily I CxxC motif signature appears at 7-10 (CLTC). The Mn(2+) site is built by Asp-156, Asn-157, and Asp-191. The Subfamily I GNFE motif signature appears at 243–246 (GNFE). The Subfamily I KC motif motif lies at 263–264 (KC).

This sequence belongs to the damage-control phosphatase family. Nucleotides phosphatase I subfamily. Mn(2+) serves as cofactor. Requires Ni(2+) as cofactor. The cofactor is [2Fe-2S] cluster.

With respect to regulation, activity is strongly promoted by Co(2+), Ni(2+), Mg(2+), Mn(2+), Ca(2+), Zn(2+) and Cu(2+). Activity is inhibited by EDTA. Its function is as follows. Metal-dependent phosphatase with probable damage-control functions. Shows phosphatase activity against p-nitrophenyl phosphate (pNPP), but natural substrates have not been identified yet. Low phosphatase activity against 8-oxo nucleotides suggests that it could hydrolyze oxidatively damaged purine nucleotides or their biosynthetic intermediates. The protein is Damage-control phosphatase PH1575 of Pyrococcus horikoshii (strain ATCC 700860 / DSM 12428 / JCM 9974 / NBRC 100139 / OT-3).